The following is a 364-amino-acid chain: Uroporphyrinogen decarboxylase (364 aa).

Residues 49–53, Asp-98, Tyr-173, Ser-228, and His-341 each bind substrate; that span reads RQAGR.

The protein belongs to the uroporphyrinogen decarboxylase family. In terms of assembly, homodimer.

It is found in the cytoplasm. The catalysed reaction is uroporphyrinogen III + 4 H(+) = coproporphyrinogen III + 4 CO2. It participates in porphyrin-containing compound metabolism; protoporphyrin-IX biosynthesis; coproporphyrinogen-III from 5-aminolevulinate: step 4/4. Functionally, catalyzes the decarboxylation of four acetate groups of uroporphyrinogen-III to yield coproporphyrinogen-III. In Protochlamydia amoebophila (strain UWE25), this protein is Uroporphyrinogen decarboxylase.